The chain runs to 770 residues: Signal transducer and activator of transcription 3 (770 aa).

Residue Ala-2 is modified to N-acetylalanine. Residues Lys-49 and Lys-87 each carry the N6-acetyllysine modification. Residues 150 to 162 (DVRKRVQDLEQKM) carry the Essential for nuclear import motif. The 91-residue stretch at 580–670 (WNEGYIMGFI…DATNILVSPL (91 aa)) folds into the SH2 domain. 3 positions are modified to allysine; alternate: Lys-601, Lys-615, and Lys-631. Lys-601, Lys-615, and Lys-631 each carry N6-acetyllysine; alternate. Phosphotyrosine; by TYK2 is present on Tyr-640. Residue Lys-685 is modified to Allysine; alternate. Lys-685 is subject to N6-acetyllysine; alternate. Position 705 is a phosphotyrosine; by FER and PTK6 (Tyr-705). Lys-707 is modified (N6-acetyllysine). The residue at position 714 (Thr-714) is a Phosphothreonine. Ser-727 is subject to Phosphoserine; by DYRK2, NLK, NEK6, IRAK1, RPS6KA5, ZIPK/DAPK3 and PKC/PRKCE.

Belongs to the transcription factor STAT family. As to quaternary structure, forms a homodimer or a heterodimer with a related family member (at least STAT1). Component of a promoter-binding complex composed of STAT3, NFATC3 and NFATC4; complex formation is enhanced by calcineurin. Interacts with IL31RA, NCOA1, PELP1, SIPAR, SOCS7, STATIP1 and TMF1. Interacts with IL23R in presence of IL23. Interacts (via SH2 domain) with NLK. Interacts with ARL2BP; the interaction is enhanced by LIF and JAK1 expression. Interacts with KPNA4 and KPNA5; KPNA4 may be the primary mediator of nuclear import. Interacts with CAV2; the interaction is increased on insulin-induced tyrosine phosphorylation of CAV2 and leads to STAT3 activation. Interacts with ARL2BP; interaction is enhanced with ARL2. Interacts with NEK6. Binds to CDK9 when activated and nuclear. Interacts with BMX. Interacts with ZIPK/DAPK3. Interacts with PIAS3; the interaction occurs on stimulation by IL6, CNTF or OSM and inhibits the DNA binding activity of STAT3. In prostate cancer cells, interacts with PRKCE and promotes DNA binding activity of STAT3. Interacts with STMN3, antagonizing its microtubule-destabilizing activity. Interacts with the 'Lys-129' acetylated form of BIRC5/survivin. Interacts with FER. Interacts (via SH2 domain) with EIF2AK2/PKR (via the kinase catalytic domain). Interacts with FGFR4. Interacts with INPP5F; the interaction is independent of STAT3 Tyr-705 phosphorylation status. Interacts with OCIAD1 and OCIAD2. Interacts (unphosphorylated or phosphorylated at Ser-727) with PHB1. Interacts and may form heterodimers with NHLH1. Found in a complex with SLC39A6, SLC39A10 and with the 'Ser-727' phosphorylated form of STAT3 throughout mitosis. Interacts (when acetylated) with EP300 (via bromo domain); interaction takes place following STAT3 acetylation by EP300 and promotes enhanceosome assembly. Interacts (when acetylated) with BRD2 (via bromo domain); interaction promotes STAT3 recruitment to chromatin and T-helper Th17 cell differentiation. Interacts with FAM220A/SIPAR; the interaction occurs in both the nucleus and the cytoplasm, is enhanced by IL6 and promotes STAT3 dephosphorylation. Interacts in both unphosphorylated and phosphorylated forms with FAM220A but interacts preferentially in the phosphorylated form in the nucleus. Interacts with PTPN2; the interaction is promoted by FAM220A and leads to STAT3 dephosphorylation which negatively regulates STAT3 transcriptional activator activity. Activated through tyrosine phosphorylation by BMX. Tyrosine phosphorylated in response to IL-6, IL-11, CNTF, LIF, CSF-1, EGF, PDGF, IFN-alpha and OSM. Tyrosine phosphorylated in response to constitutively activated FGFR1, FGFR2, FGFR3 and FGFR4. Phosphorylated on serine upon DNA damage, probably by ATM or ATR. Serine phosphorylation is important for the formation of stable DNA-binding STAT3 homodimers and maximal transcriptional activity. ARL2BP may participate in keeping the phosphorylated state of STAT3 within the nucleus. Tyrosine phosphorylated upon stimulation with EGF. Upon LPS challenge, phosphorylated within the nucleus by IRAK1. Phosphorylated on Ser-727 by RPS6KA5. Dephosphorylation on tyrosine residues by PTPN2 negatively regulates IL6/interleukin-6 signaling. Phosphorylation at Tyr-705 by FER, isoform M2 of PKM (PKM2) or PTK6 leads to an increase of its transcriptional activity. Phosphorylation at Tyr-705 is increased in the presence of calcineurin. Phosphorylation at Tyr-640 by TYK2 negatively regulates transcriptional activity. Post-translationally, acetylated on lysine residues by EP300/p300, promoting its activation. Acetylation at Lys-49 and Lys-87 by EP300/p300 promotes its activation. Acetylation at Lys-87 by EP300/p300 promotes its association with BRD2 and recruitment to chromatin. Deacetylated at Lys-49 and Lys-87 by HDAC1. Acetylation at Lys-685 by EP300/p300 promotes its homodimerization and activation. Deacetylated at Lys-685 by HDAC3. Acetylated on lysine residues by CREBBP. Deacetylation by LOXL3 leads to disrupt STAT3 dimerization and inhibit STAT3 transcription activity. Oxidation of lysine residues to allysine on STAT3 preferentially takes place on lysine residues that are acetylated. In terms of processing, some lysine residues are oxidized to allysine by LOXL3, leading to disrupt STAT3 dimerization and inhibit STAT3 transcription activity. Oxidation of lysine residues to allysine on STAT3 preferentially takes place on lysine residues that are acetylated.

The protein localises to the cytoplasm. Its subcellular location is the nucleus. Its function is as follows. Signal transducer and transcription activator that mediates cellular responses to interleukins, KITLG/SCF, LEP and other growth factors. Once activated, recruits coactivators, such as NCOA1 or MED1, to the promoter region of the target gene. May mediate cellular responses to activated FGFR1, FGFR2, FGFR3 and FGFR4. Upon activation of IL6ST/gp130 signaling by interleukin-6 (IL6), binds to the IL6-responsive elements identified in the promoters of various acute-phase protein genes. Activated by IL31 through IL31RA. Acts as a regulator of inflammatory response by regulating differentiation of naive CD4(+) T-cells into T-helper Th17 or regulatory T-cells (Treg): acetylation promotes its transcription activity and cell differentiation while deacetylation and oxidation of lysine residues by LOXL3 inhibits differentiation. Involved in cell cycle regulation by inducing the expression of key genes for the progression from G1 to S phase, such as CCND1. Mediates the effects of LEP on melanocortin production, body energy homeostasis and lactation. May play an apoptotic role by transctivating BIRC5 expression under LEP activation. Cytoplasmic STAT3 represses macroautophagy by inhibiting EIF2AK2/PKR activity. Plays a crucial role in basal beta cell functions, such as regulation of insulin secretion. Following JAK/STAT signaling activation and as part of a complex with NFATC3 and NFATC4, binds to the alpha-beta E4 promoter region of CRYAB and activates transcription in cardiomyocytes. Plays an important role in host defense in methicillin-resistant S.aureus lung infection by regulating the expression of the antimicrobial lectin REG3G. This is Signal transducer and activator of transcription 3 (STAT3) from Bos taurus (Bovine).